The following is a 118-amino-acid chain: Large ribosomal subunit protein bL20 (118 aa).

The protein belongs to the bacterial ribosomal protein bL20 family.

Functionally, binds directly to 23S ribosomal RNA and is necessary for the in vitro assembly process of the 50S ribosomal subunit. It is not involved in the protein synthesizing functions of that subunit. This Hamiltonella defensa subsp. Acyrthosiphon pisum (strain 5AT) protein is Large ribosomal subunit protein bL20.